A 301-amino-acid chain; its full sequence is Methionyl-tRNA formyltransferase (301 aa).

110–113 provides a ligand contact to (6S)-5,6,7,8-tetrahydrofolate; the sequence is SLLP.

The protein belongs to the Fmt family.

It catalyses the reaction L-methionyl-tRNA(fMet) + (6R)-10-formyltetrahydrofolate = N-formyl-L-methionyl-tRNA(fMet) + (6S)-5,6,7,8-tetrahydrofolate + H(+). Functionally, attaches a formyl group to the free amino group of methionyl-tRNA(fMet). The formyl group appears to play a dual role in the initiator identity of N-formylmethionyl-tRNA by promoting its recognition by IF2 and preventing the misappropriation of this tRNA by the elongation apparatus. This chain is Methionyl-tRNA formyltransferase, found in Acidiphilium cryptum (strain JF-5).